Reading from the N-terminus, the 75-residue chain is U6-lycotoxin-Ls1f (75 aa).

The signal sequence occupies residues 1 to 21 (MKLLLFTALVLVVISLVEVEA). A propeptide spanning residues 22 to 25 (ENER) is cleaved from the precursor.

The protein belongs to the neurotoxin 19 (CSTX) family. 06 (U6-Lctx) subfamily. In terms of processing, contains 4 disulfide bonds. Expressed by the venom gland.

It localises to the secreted. The protein is U6-lycotoxin-Ls1f of Lycosa singoriensis (Wolf spider).